We begin with the raw amino-acid sequence, 309 residues long: Malate dehydrogenase (309 aa).

NAD(+) contacts are provided by residues 8-13 and Asp-33; that span reads GAGLVG. Substrate contacts are provided by Arg-82 and Arg-88. Residues Asn-95 and 118 to 120 each bind NAD(+); that span reads VSN. Residues Asn-120 and Arg-151 each coordinate substrate. His-175 acts as the Proton acceptor in catalysis.

This sequence belongs to the LDH/MDH superfamily. MDH type 3 family.

The catalysed reaction is (S)-malate + NAD(+) = oxaloacetate + NADH + H(+). Catalyzes the reversible oxidation of malate to oxaloacetate. This chain is Malate dehydrogenase, found in Pseudomonas putida (strain ATCC 700007 / DSM 6899 / JCM 31910 / BCRC 17059 / LMG 24140 / F1).